The following is a 592-amino-acid chain: Tetrathionate sensor histidine kinase TtrS (592 aa).

Helical transmembrane passes span 11–31 and 307–327; these read VLAA…NIGI and VGGV…VMLL. Residues 364–581 enclose the Histidine kinase domain; that stretch reads GFAHELNQPL…VVTIHFLHEN (218 aa). A Phosphohistidine; by autocatalysis modification is found at His-367.

Autophosphorylated.

It is found in the cell inner membrane. The enzyme catalyses ATP + protein L-histidine = ADP + protein N-phospho-L-histidine.. Its function is as follows. Member of the two-component regulatory system TtrR/TtrS, which is required for synthesis of tetrathionate reductase. Probably functions as a sensor protein kinase which is autophosphorylated at a histidine residue in response to tetrathionate, and transfers its phosphate group to TtrR. During mice infection, the ability to use tetrathionate as an electron acceptor is a growth advantage for S.typhimurium over the competing microbiota in the lumen of the inflamed gut. This chain is Tetrathionate sensor histidine kinase TtrS (ttrS), found in Salmonella typhimurium (strain LT2 / SGSC1412 / ATCC 700720).